We begin with the raw amino-acid sequence, 512 residues long: Tyrosine-protein kinase Lyn (512 aa).

A disordered region spans residues M1–L50. The N-myristoyl glycine moiety is linked to residue G2. C3 is lipidated: S-palmitoyl cysteine. The SH3 domain maps to E63–T123. One can recognise an SH2 domain in the interval W129 to C226. Y193 carries the phosphotyrosine modification. S228 is subject to Phosphoserine. Positions I247 to Y501 constitute a Protein kinase domain. Residues L253–V261 and K275 each bind ATP. Y306 and Y316 each carry phosphotyrosine. Catalysis depends on D367, which acts as the Proton acceptor. Y397 bears the Phosphotyrosine; by autocatalysis mark. Phosphotyrosine occurs at positions 460 and 473. Y508 is subject to Phosphotyrosine; by autocatalysis, CSK and MATK.

The protein belongs to the protein kinase superfamily. Tyr protein kinase family. SRC subfamily. Interacts with TEC. Interacts (via SH2 domain) with FLT3 (tyrosine phosphorylated). Interacts with LIME1 and with CD79A upon activation of the B-cell antigen receptor. Interacts with the B-cell receptor complex. Interacts with phosphorylated THEMIS2. Interacts with EPOR. Interacts with MS4A2/FCER1B. Interaction (via the SH2 and SH3 domains) with MUC1 is stimulated by IL7 and the subsequent phosphorylation increases the binding between MUC1 and CTNNB1/beta-catenin. Interacts with ADAM15. Interacts with NDFIP2 and more weakly with NDFIP1. Interacts with FASLG. Interacts with KIT. Interacts with HCLS1. Interacts with FCGR2B. Interacts with FCGR1A; the interaction may be indirect. Interacts with CD19, CD22, CD79A and CD79B. Interacts (via SH3 domain) with CBLC, PPP1R15A and PDE4A. Interacts with TGFB1I1. Interacts (via SH3 domain) with PIK3R1, the regulatory subunit of phosphatidylinositol 3-kinase; this interaction enhances phosphatidylinositol 3-kinase activity. Interacts with CSF2RB, the common subunit of the IL3, IL5 and CSF2 receptors. Interacts with PAG1; identified in a complex with PAG1 and STAT3. Interacts with ABL1. Interacts with PTPN6/SHP-1. Interacts (via SH3 domain) with SCIMP (via proline-rich region). This interaction facilitates the phosphorylation of SCIMP 'Tyr-96', which enhances binding of SCIMP to TLR4, and consequently the phosphorylation of TLR4 in response to stimulation by lipopolysaccharide in macrophages. Interacts with LPXN (via LD motif 3) and the interaction is induced upon B-cell antigen receptor (BCR) activation. Interacts (via SH3-domain) with ANKRD54 (via ankyrin repeat region) in an activation-independent status of LYN. Forms a multiprotein complex with ANKRD54 and HCLS1. Interacts (via SH2 and SH3 domains) with UNC119; leading to LYN activation. Interacts with CD36. Interacts with LYN. Interacts with SKAP1 and FYB1; this interaction promotes the phosphorylation of CLNK. Interacts with BCAR1/CAS and NEDD9/HEF1. Post-translationally, ubiquitinated. Ubiquitination is SH3-dependent. Autophosphorylated. Phosphorylated on tyrosine residues in response to KIT signaling. Phosphorylation at Tyr-397 is required for optimal activity. Phosphorylation at Tyr-508 inhibits kinase activity. Phosphorylated at Tyr-508 by CSK. Dephosphorylated by PTPRC/CD45. Becomes rapidly phosphorylated upon activation of the B-cell receptor and the immunoglobulin receptor FCGR1A. Phosphorylated in response to integrin ITGB1 in B-cells. In terms of tissue distribution, detected in spleen (at protein level). Expressed predominantly in B-lymphoid and myeloid cells.

Its subcellular location is the cell membrane. The protein localises to the nucleus. It is found in the cytoplasm. The protein resides in the perinuclear region. It localises to the golgi apparatus. Its subcellular location is the membrane. It carries out the reaction L-tyrosyl-[protein] + ATP = O-phospho-L-tyrosyl-[protein] + ADP + H(+). With respect to regulation, subject to autoinhibition, mediated by intramolecular interactions between the SH2 domain and the C-terminal phosphotyrosine. Phosphorylation at Tyr-397 is required for optimal activity. Phosphorylated by CSK at Tyr-508; phosphorylation at Tyr-508 inhibits kinase activity. Kinase activity is modulated by dephosphorylation by PTPRC/CD45. In terms of biological role, non-receptor tyrosine-protein kinase that transmits signals from cell surface receptors and plays an important role in the regulation of innate and adaptive immune responses, hematopoiesis, responses to growth factors and cytokines, integrin signaling, but also responses to DNA damage and genotoxic agents. Functions primarily as negative regulator, but can also function as activator, depending on the context. Required for the initiation of the B-cell response, but also for its down-regulation and termination. Plays an important role in the regulation of B-cell differentiation, proliferation, survival and apoptosis, and is important for immune self-tolerance. Acts downstream of several immune receptors, including the B-cell receptor, CD79A, CD79B, CD5, CD19, CD22, FCER1, FCGR2, FCGR1A, TLR2 and TLR4. Plays a role in the inflammatory response to bacterial lipopolysaccharide. Mediates the responses to cytokines and growth factors in hematopoietic progenitors, platelets, erythrocytes, and in mature myeloid cells, such as dendritic cells, neutrophils and eosinophils. Acts downstream of EPOR, KIT, MPL, the chemokine receptor CXCR4, as well as the receptors for IL3, IL5 and CSF2. Plays an important role in integrin signaling. Regulates cell proliferation, survival, differentiation, migration, adhesion, degranulation, and cytokine release. Involved in the regulation of endothelial activation, neutrophil adhesion and transendothelial migration. Down-regulates signaling pathways by phosphorylation of immunoreceptor tyrosine-based inhibitory motifs (ITIM), that then serve as binding sites for phosphatases, such as PTPN6/SHP-1, PTPN11/SHP-2 and INPP5D/SHIP-1, that modulate signaling by dephosphorylation of kinases and their substrates. Phosphorylates LIME1 in response to CD22 activation. Phosphorylates BTK, CBL, CD5, CD19, CD72, CD79A, CD79B, CSF2RB, DOK1, HCLS1, LILRB3/PIR-B, MS4A2/FCER1B, SYK and TEC. Promotes phosphorylation of SIRPA, PTPN6/SHP-1, PTPN11/SHP-2 and INPP5D/SHIP-1. Required for rapid phosphorylation of FER in response to FCER1 activation. Mediates KIT phosphorylation. Acts as an effector of EPOR (erythropoietin receptor) in controlling KIT expression and may play a role in erythroid differentiation during the switch between proliferation and maturation. Depending on the context, activates or inhibits several signaling cascades. Regulates phosphatidylinositol 3-kinase activity and AKT1 activation. Regulates activation of the MAP kinase signaling cascade, including activation of MAP2K1/MEK1, MAPK1/ERK2, MAPK3/ERK1, MAPK8/JNK1 and MAPK9/JNK2. Mediates activation of STAT5A and/or STAT5B. Phosphorylates LPXN on 'Tyr-72'. Kinase activity facilitates TLR4-TLR6 heterodimerization and signal initiation. Phosphorylates SCIMP on 'Tyr-96'; this enhances binding of SCIMP to TLR4, promoting the phosphorylation of TLR4, and a selective cytokine response to lipopolysaccharide in macrophages. Phosphorylates CLNK. Phosphorylates BCAR1/CAS and NEDD9/HEF1. This chain is Tyrosine-protein kinase Lyn (Lyn), found in Rattus norvegicus (Rat).